Reading from the N-terminus, the 492-residue chain is MQEAPAALPTEPGPSPVPAFLGKLWALVGDPGTDHLIRWSPSGTSFLVSDQSRFAKEVLPQYFKHSNMASFVRQLNMYGFRKVVSIEQGGLLRPERDHVEFQHPSFVRGREQLLERVRRKVPALRGDDGRWRPEDLGRLLGEVQALRGVQESTEARLRELRQQNEILWREVVTLRQSHGQQHRVIGKLIQCLFGPLQAGPSNAGGKRKLSLMLDEGSSCPTPAKFNTCPLPGALLQDPYFIQSPLPETNLGLSPHRARGPIISDIPEDSPSPEGTRLSPSSDGRREKGLALLKEEPASPGGDGEAGLALAPNECDFCVTAPPPLPVAVVQAILEGKGSFSPEGPRNAQQPEPGDPREIPDRGPLGLESGDRSPESLLPPMLLQPPQESVEPAGPLDVLGPSLQGREWTLMDLDMELSLMQPLVPERGEPELAVKGLNSPSPGKDPTLGAPLLLDVQAALGGPALGLPGALTIYSTPESRTASYLGPEASPSP.

Residues 17–121 mediate DNA binding; it reads VPAFLGKLWA…QLLERVRRKV (105 aa). Residues 129–203 are hydrophobic repeat HR-A/B; that stretch reads GRWRPEDLGR…GPLQAGPSNA (75 aa). The tract at residues 245–322 is interactions with DUSP26, MAPK1 and MAPK2; sequence LPETNLGLSP…ECDFCVTAPP (78 aa). The interval 246-285 is disordered; it reads PETNLGLSPHRARGPIISDIPEDSPSPEGTRLSPSSDGRR. Residue lysine 293 forms a Glycyl lysine isopeptide (Lys-Gly) (interchain with G-Cter in SUMO) linkage. The residue at position 298 (serine 298) is a Phosphoserine. Positions 337–400 are disordered; the sequence is GSFSPEGPRN…PAGPLDVLGP (64 aa). Positions 364–389 are hydrophobic repeat HR-C; the sequence is LGLESGDRSPESLLPPMLLQPPQESV. Residues 374 to 388 are compositionally biased toward low complexity; it reads ESLLPPMLLQPPQES.

The protein belongs to the HSF family. Homotrimer. Exhibits constitutive DNA binding and forms trimers even in the absence of stress. Interacts with ALKBH4, DUSP26, MAPK1, MAPK2, MAPK8 and MAP kinase p38. Phosphorylated mainly on serine residues. Phosphorylation on Ser-298 promotes sumoylation on Lys-293. Post-translationally, isoform HSF4B is constitutively sumoylated. Sumoylation represses the transcriptional activity and is promoted by phosphorylation on Ser-298. HSFA is not sumoylated. As to expression, expressed in heart, skeletal muscle, eye and brain, and at much lower levels in some other tissues.

Its subcellular location is the nucleus. Heat-shock transcription factor that specifically binds heat shock promoter elements (HSE). Required for denucleation and organelle rupture and degradation that occur during eye lens terminal differentiation, when fiber cells that compose the lens degrade all membrane-bound organelles in order to provide lens with transparency to allow the passage of light. In this process, may regulate denucleation of lens fiber cells in part by activating DNASE2B transcription. May be involved in DNA repair through the transcriptional regulation of RAD51. May up-regulate p53/TP53 protein in eye lens fiber cells, possibly through protein stabilization. In the eye lens, controls the expression of alpha-crystallin B chain/CRYAB and consequently may be involved in the regulation of lysosomal acidification. Its function is as follows. Transcriptional repressor. In terms of biological role, transcriptional activator. The protein is Heat shock factor protein 4 (HSF4) of Homo sapiens (Human).